The sequence spans 84 residues: NAD(P)H-quinone oxidoreductase subunit O (84 aa).

This sequence belongs to the complex I NdhO subunit family. NDH-1 can be composed of about 15 different subunits; different subcomplexes with different compositions have been identified which probably have different functions.

The protein localises to the cellular thylakoid membrane. It carries out the reaction a plastoquinone + NADH + (n+1) H(+)(in) = a plastoquinol + NAD(+) + n H(+)(out). It catalyses the reaction a plastoquinone + NADPH + (n+1) H(+)(in) = a plastoquinol + NADP(+) + n H(+)(out). In terms of biological role, NDH-1 shuttles electrons from an unknown electron donor, via FMN and iron-sulfur (Fe-S) centers, to quinones in the respiratory and/or the photosynthetic chain. The immediate electron acceptor for the enzyme in this species is believed to be plastoquinone. Couples the redox reaction to proton translocation, and thus conserves the redox energy in a proton gradient. Cyanobacterial NDH-1 also plays a role in inorganic carbon-concentration. The sequence is that of NAD(P)H-quinone oxidoreductase subunit O from Parasynechococcus marenigrum (strain WH8102).